The primary structure comprises 229 residues: Urease accessory protein UreG (229 aa).

24–31 (GPVGSGKT) is a GTP binding site.

The protein belongs to the SIMIBI class G3E GTPase family. UreG subfamily. In terms of assembly, homodimer. UreD, UreF and UreG form a complex that acts as a GTP-hydrolysis-dependent molecular chaperone, activating the urease apoprotein by helping to assemble the nickel containing metallocenter of UreC. The UreE protein probably delivers the nickel.

Its subcellular location is the cytoplasm. Facilitates the functional incorporation of the urease nickel metallocenter. This process requires GTP hydrolysis, probably effectuated by UreG. The polypeptide is Urease accessory protein UreG (Albidiferax ferrireducens (strain ATCC BAA-621 / DSM 15236 / T118) (Rhodoferax ferrireducens)).